Consider the following 409-residue polypeptide: Effector protein BipC (409 aa).

Disordered stretches follow at residues 268-287 (RETG…RMSD) and 330-396 (SGGQ…VAND). Low complexity predominate over residues 360-369 (AQQTAMAAAS). The span at 370–382 (ARDEAAHRGRDAA) shows a compositional bias: basic and acidic residues.

This sequence belongs to the SctB/SipC family.

Its subcellular location is the secreted. The protein is Effector protein BipC (bipC) of Burkholderia thailandensis (strain ATCC 700388 / DSM 13276 / CCUG 48851 / CIP 106301 / E264).